A 536-amino-acid chain; its full sequence is Peptide chain release factor 3 (536 aa).

Residues 13-281 form the tr-type G domain; that stretch reads SHRRTFAIIS…ALIDWAPAPQ (269 aa). Residues 22–29, 90–94, and 144–147 each bind GTP; these read SHPDAGKT, DTPGH, and NKCD.

Belongs to the TRAFAC class translation factor GTPase superfamily. Classic translation factor GTPase family. PrfC subfamily.

It is found in the cytoplasm. In terms of biological role, increases the formation of ribosomal termination complexes and stimulates activities of RF-1 and RF-2. It binds guanine nucleotides and has strong preference for UGA stop codons. It may interact directly with the ribosome. The stimulation of RF-1 and RF-2 is significantly reduced by GTP and GDP, but not by GMP. This Chromobacterium violaceum (strain ATCC 12472 / DSM 30191 / JCM 1249 / CCUG 213 / NBRC 12614 / NCIMB 9131 / NCTC 9757 / MK) protein is Peptide chain release factor 3.